Consider the following 151-residue polypeptide: Deoxyuridine 5'-triphosphate nucleotidohydrolase (151 aa).

Substrate is bound by residues 70 to 72, asparagine 83, 87 to 89, and methionine 97; these read RSG and LID.

This sequence belongs to the dUTPase family. Mg(2+) serves as cofactor.

It catalyses the reaction dUTP + H2O = dUMP + diphosphate + H(+). The protein operates within pyrimidine metabolism; dUMP biosynthesis; dUMP from dCTP (dUTP route): step 2/2. This enzyme is involved in nucleotide metabolism: it produces dUMP, the immediate precursor of thymidine nucleotides and it decreases the intracellular concentration of dUTP so that uracil cannot be incorporated into DNA. The sequence is that of Deoxyuridine 5'-triphosphate nucleotidohydrolase from Pseudomonas paraeruginosa (strain DSM 24068 / PA7) (Pseudomonas aeruginosa (strain PA7)).